The primary structure comprises 321 residues: Olfactory receptor 3A3 (321 aa).

At 1-34 the chain is on the extracellular side; that stretch reads MSLQKLMEPEAGTNRTAVAEFILLGLVQTEEMQP. A glycan (N-linked (GlcNAc...) asparagine) is linked at Asn14. The helical transmembrane segment at 35–58 threads the bilayer; the sequence is VVFVLLLFAYLVTTGGNLSILAAV. Residues 59–66 are Cytoplasmic-facing; it reads LVEPKLHA. A helical transmembrane segment spans residues 67–88; that stretch reads PMYFFLGNLSVLDVGCITVTVP. The Extracellular portion of the chain corresponds to 89–109; the sequence is AMLGRLLSHKSTISYDACLSQ. A disulfide bond links Cys106 and Cys198. The chain crosses the membrane as a helical span at residues 110 to 129; that stretch reads LFFFHLLAGMDCFLLTAMAY. Over 130-149 the chain is Cytoplasmic; sequence DRLLAICQPLTYSTRMSQTV. Residues 150–167 form a helical membrane-spanning segment; sequence QRMLVAASWACAFTNALT. At 168–205 the chain is on the extracellular side; that stretch reads HTVAMSTLNFCGPNEVNHFYCDLPQLFQLSCSSTQLNE. The chain crosses the membrane as a helical span at residues 206 to 228; the sequence is LLLFVAAAFMAVAPLVFISVSYA. At 229–245 the chain is on the cytoplasmic side; that stretch reads HVVAAVLQIRSAEGRKK. A helical transmembrane segment spans residues 246–268; the sequence is AFSTCGSHLTVVGIFYGTGVFSY. The Extracellular portion of the chain corresponds to 269–281; that stretch reads MRLGSVESSDKDK. Residues 282-301 traverse the membrane as a helical segment; that stretch reads GVGVFMTVINPMLNPLIYSL. Residues 302–321 are Cytoplasmic-facing; sequence RNTDVQGALCQLLVGKRSLT.

It belongs to the G-protein coupled receptor 1 family.

It is found in the cell membrane. In terms of biological role, odorant receptor. The sequence is that of Olfactory receptor 3A3 (OR3A3) from Homo sapiens (Human).